The primary structure comprises 232 residues: V-type ATP synthase subunit E (232 aa).

This sequence belongs to the V-ATPase E subunit family.

Functionally, produces ATP from ADP in the presence of a proton gradient across the membrane. This Treponema pallidum (strain Nichols) protein is V-type ATP synthase subunit E (atpE).